A 110-amino-acid polypeptide reads, in one-letter code: Large ribosomal subunit protein uL22 (110 aa).

Belongs to the universal ribosomal protein uL22 family. In terms of assembly, part of the 50S ribosomal subunit.

Functionally, this protein binds specifically to 23S rRNA; its binding is stimulated by other ribosomal proteins, e.g. L4, L17, and L20. It is important during the early stages of 50S assembly. It makes multiple contacts with different domains of the 23S rRNA in the assembled 50S subunit and ribosome. In terms of biological role, the globular domain of the protein is located near the polypeptide exit tunnel on the outside of the subunit, while an extended beta-hairpin is found that lines the wall of the exit tunnel in the center of the 70S ribosome. The polypeptide is Large ribosomal subunit protein uL22 (Baumannia cicadellinicola subsp. Homalodisca coagulata).